A 1199-amino-acid chain; its full sequence is DNA-directed RNA polymerase subunit beta' (1199 aa).

Zn(2+) is bound by residues Cys60, Cys62, Cys75, and Cys78. Mg(2+) contacts are provided by Asp449, Asp451, and Asp453. Zn(2+)-binding residues include Cys818, Cys892, Cys899, and Cys902.

It belongs to the RNA polymerase beta' chain family. In terms of assembly, RNAP is composed of a core of 2 alpha, a beta and a beta' subunit. The core is associated with a delta subunit, and at least one of epsilon or omega. When a sigma factor is associated with the core the holoenzyme is formed, which can initiate transcription. Requires Mg(2+) as cofactor. Zn(2+) is required as a cofactor.

It catalyses the reaction RNA(n) + a ribonucleoside 5'-triphosphate = RNA(n+1) + diphosphate. DNA-dependent RNA polymerase catalyzes the transcription of DNA into RNA using the four ribonucleoside triphosphates as substrates. In Bacillus subtilis (strain 168), this protein is DNA-directed RNA polymerase subunit beta'.